Consider the following 150-residue polypeptide: Large ribosomal subunit protein uL13 (150 aa).

Residues 129-150 (TEHPHAAQKPQPLQLNPSASAQ) are disordered. Residues 139 to 150 (QPLQLNPSASAQ) show a composition bias toward polar residues.

Belongs to the universal ribosomal protein uL13 family. As to quaternary structure, part of the 50S ribosomal subunit.

Functionally, this protein is one of the early assembly proteins of the 50S ribosomal subunit, although it is not seen to bind rRNA by itself. It is important during the early stages of 50S assembly. The chain is Large ribosomal subunit protein uL13 from Synechococcus sp. (strain CC9605).